A 226-amino-acid polypeptide reads, in one-letter code: UPF0758 protein SGO_1229 (226 aa).

The region spanning Arg-103–Leu-225 is the MPN domain. The Zn(2+) site is built by His-174, His-176, and Asp-187. Residues His-174–Asp-187 carry the JAMM motif motif.

This sequence belongs to the UPF0758 family.

The protein is UPF0758 protein SGO_1229 of Streptococcus gordonii (strain Challis / ATCC 35105 / BCRC 15272 / CH1 / DL1 / V288).